We begin with the raw amino-acid sequence, 382 residues long: Dual-specificity RNA methyltransferase RlmN (382 aa).

E96 serves as the catalytic Proton acceptor. The region spanning Q102–D342 is the Radical SAM core domain. Cysteines 109 and 345 form a disulfide. Residues C116, C120, and C123 each coordinate [4Fe-4S] cluster. Residues G170 to E171, S202, S224 to H226, and N302 contribute to the S-adenosyl-L-methionine site. C345 (S-methylcysteine intermediate) is an active-site residue.

Belongs to the radical SAM superfamily. RlmN family. It depends on [4Fe-4S] cluster as a cofactor.

The protein resides in the cytoplasm. The catalysed reaction is adenosine(2503) in 23S rRNA + 2 reduced [2Fe-2S]-[ferredoxin] + 2 S-adenosyl-L-methionine = 2-methyladenosine(2503) in 23S rRNA + 5'-deoxyadenosine + L-methionine + 2 oxidized [2Fe-2S]-[ferredoxin] + S-adenosyl-L-homocysteine. It carries out the reaction adenosine(37) in tRNA + 2 reduced [2Fe-2S]-[ferredoxin] + 2 S-adenosyl-L-methionine = 2-methyladenosine(37) in tRNA + 5'-deoxyadenosine + L-methionine + 2 oxidized [2Fe-2S]-[ferredoxin] + S-adenosyl-L-homocysteine. In terms of biological role, specifically methylates position 2 of adenine 2503 in 23S rRNA and position 2 of adenine 37 in tRNAs. m2A2503 modification seems to play a crucial role in the proofreading step occurring at the peptidyl transferase center and thus would serve to optimize ribosomal fidelity. The chain is Dual-specificity RNA methyltransferase RlmN from Pseudomonas syringae pv. tomato (strain ATCC BAA-871 / DC3000).